Here is a 341-residue protein sequence, read N- to C-terminus: Putative ankyrin repeat protein FPV031 (341 aa).

ANK repeat units lie at residues aspartate 23–threonine 55, aspartate 58–glutamine 87, cysteine 92–asparagine 124, aspartate 125–asparagine 158, and threonine 163–cysteine 195.

The chain is Putative ankyrin repeat protein FPV031 (ANK3) from Fowlpox virus (strain NVSL) (FPV).